The primary structure comprises 116 residues: Large ribosomal subunit protein bL20 (116 aa).

This sequence belongs to the bacterial ribosomal protein bL20 family.

Functionally, binds directly to 23S ribosomal RNA and is necessary for the in vitro assembly process of the 50S ribosomal subunit. It is not involved in the protein synthesizing functions of that subunit. The polypeptide is Large ribosomal subunit protein bL20 (Thermosynechococcus vestitus (strain NIES-2133 / IAM M-273 / BP-1)).